The chain runs to 228 residues: L-ribulose-5-phosphate 4-epimerase UlaF (228 aa).

Residues 26 to 27 (GN), 43 to 44 (SG), and 72 to 73 (SS) each bind substrate. Zn(2+) is bound by residues Asp-74, His-93, and His-95. Catalysis depends on Asp-118, which acts as the Proton donor/acceptor. Residue His-167 participates in Zn(2+) binding. The Proton donor/acceptor role is filled by Tyr-225.

Belongs to the aldolase class II family. AraD/FucA subfamily. It depends on Zn(2+) as a cofactor.

The catalysed reaction is L-ribulose 5-phosphate = D-xylulose 5-phosphate. It participates in cofactor degradation; L-ascorbate degradation; D-xylulose 5-phosphate from L-ascorbate: step 4/4. Its function is as follows. Catalyzes the isomerization of L-ribulose 5-phosphate to D-xylulose 5-phosphate. Is involved in the anaerobic L-ascorbate utilization. This Salmonella choleraesuis (strain SC-B67) protein is L-ribulose-5-phosphate 4-epimerase UlaF.